Here is a 72-residue protein sequence, read N- to C-terminus: DNA gyrase inhibitor YacG (72 aa).

Zn(2+) contacts are provided by Cys14, Cys17, Cys33, and Cys37.

This sequence belongs to the DNA gyrase inhibitor YacG family. As to quaternary structure, interacts with GyrB. The cofactor is Zn(2+).

Its function is as follows. Inhibits all the catalytic activities of DNA gyrase by preventing its interaction with DNA. Acts by binding directly to the C-terminal domain of GyrB, which probably disrupts DNA binding by the gyrase. The protein is DNA gyrase inhibitor YacG of Mannheimia succiniciproducens (strain KCTC 0769BP / MBEL55E).